Reading from the N-terminus, the 206-residue chain is Large ribosomal subunit protein bL25 (206 aa).

Residues 168-206 are disordered; that stretch reads DPEESVVTVEVPEDASESTAAPEAAAPAADAAAPAADAK. The span at 184 to 206 shows a compositional bias: low complexity; that stretch reads ESTAAPEAAAPAADAAAPAADAK.

This sequence belongs to the bacterial ribosomal protein bL25 family. CTC subfamily. Part of the 50S ribosomal subunit; part of the 5S rRNA/L5/L18/L25 subcomplex. Contacts the 5S rRNA. Binds to the 5S rRNA independently of L5 and L18.

Functionally, this is one of the proteins that binds to the 5S RNA in the ribosome where it forms part of the central protuberance. In Bifidobacterium longum (strain DJO10A), this protein is Large ribosomal subunit protein bL25.